The following is a 461-amino-acid chain: Metacaspase-1 (461 aa).

Gly residues-rich tracts occupy residues 1–21 (MSYP…GYGG), 45–66 (QYGG…GYGP), 74–86 (QYGG…GYGP), and 105–119 (PGGQ…GHPG). The segment at 1–154 (MSYPGQGGNT…PQGNQAFGGT (154 aa)) is disordered. 2 stretches are compositionally biased toward low complexity: residues 121-131 (GNQAPPGQYGQ) and 138-148 (HGNHNMPPQGN). Catalysis depends on residues H252 and C308.

Belongs to the peptidase C14B family.

In terms of biological role, involved in cell death (apoptosis). This Yarrowia lipolytica (strain CLIB 122 / E 150) (Yeast) protein is Metacaspase-1 (MCA1).